Consider the following 272-residue polypeptide: Cerberus (272 aa).

Positions 1-19 are cleaved as a signal peptide; the sequence is MSLLLLQLLVLSCLGDTEP. Disulfide bonds link cysteine 168–cysteine 215, cysteine 182–cysteine 229, cysteine 192–cysteine 245, and cysteine 196–cysteine 247. Residues 168 to 253 enclose the CTCK domain; sequence CRTLPFSQSV…ECNCETQKIE (86 aa). An N-linked (GlcNAc...) asparagine glycan is attached at asparagine 228.

The protein belongs to the DAN family.

It is found in the secreted. Its function is as follows. Cytokine that acts as a regulator of the activity of Nodal/BMP pathways during the establishment of bilateral asymmetry in the head and trunk of the embryo. The protein is Cerberus (CER1) of Gallus gallus (Chicken).